The primary structure comprises 201 residues: Prostamide/prostaglandin F synthase (201 aa).

Belongs to the peroxiredoxin-like PRXL2 family. Prostamide/prostaglandin F synthase subfamily.

The protein localises to the cytoplasm. It is found in the cytosol. The enzyme catalyses prostaglandin H2 + [thioredoxin]-dithiol = prostaglandin F2alpha + [thioredoxin]-disulfide. It catalyses the reaction prostamide F2alpha + [thioredoxin]-disulfide = prostamide H2 + [thioredoxin]-dithiol. Functionally, catalyzes the reduction of prostaglandin-ethanolamide H(2) (prostamide H(2)) to prostamide F(2alpha) with NADPH as proton donor. Also able to reduce prostaglandin H(2) to prostaglandin F(2alpha). The sequence is that of Prostamide/prostaglandin F synthase (prxl2b) from Danio rerio (Zebrafish).